The sequence spans 340 residues: GTP 3',8-cyclase (340 aa).

The Radical SAM core domain occupies 8 to 227 (KLGRPIRDLR…TMIEQHFEID (220 aa)). Position 17 (arginine 17) interacts with GTP. [4Fe-4S] cluster contacts are provided by cysteine 24 and cysteine 28. Position 30 (tyrosine 30) interacts with S-adenosyl-L-methionine. Position 31 (cysteine 31) interacts with [4Fe-4S] cluster. GTP is bound at residue arginine 71. An S-adenosyl-L-methionine-binding site is contributed by glycine 75. GTP is bound at residue threonine 102. Serine 126 is a binding site for S-adenosyl-L-methionine. Lysine 163 is a binding site for GTP. Methionine 197 provides a ligand contact to S-adenosyl-L-methionine. Residues cysteine 261 and cysteine 264 each coordinate [4Fe-4S] cluster. Residue 266 to 268 (RAR) participates in GTP binding. Cysteine 278 is a [4Fe-4S] cluster binding site.

It belongs to the radical SAM superfamily. MoaA family. Monomer and homodimer. Requires [4Fe-4S] cluster as cofactor.

It catalyses the reaction GTP + AH2 + S-adenosyl-L-methionine = (8S)-3',8-cyclo-7,8-dihydroguanosine 5'-triphosphate + 5'-deoxyadenosine + L-methionine + A + H(+). It functions in the pathway cofactor biosynthesis; molybdopterin biosynthesis. In terms of biological role, catalyzes the cyclization of GTP to (8S)-3',8-cyclo-7,8-dihydroguanosine 5'-triphosphate. The protein is GTP 3',8-cyclase of Staphylococcus aureus (strain MRSA252).